The chain runs to 883 residues: Mitogen-activated protein kinase kinase kinase YODA (883 aa).

Disordered regions lie at residues G28–F193, C303–L364, and S376–P396. The span at S57–R72 shows a compositional bias: low complexity. A compositionally biased stretch (polar residues) spans V94–Q105. Low complexity predominate over residues S143–D165. Polar residues-rich tracts occupy residues E167 to S189 and R314 to A328. The Protein kinase domain occupies W400–V656. ATP is bound by residues L406–V414 and K429. D525 acts as the Proton acceptor in catalysis. 2 disordered regions span residues G712–P773 and E787–G838. The segment covering S733–H756 has biased composition (low complexity).

The protein belongs to the protein kinase superfamily. STE Ser/Thr protein kinase family. MAP kinase kinase kinase subfamily. Interacts with ASK7. Interacts with BSK12/SSP. Binds to BASL and MPK6. Expressed in roots, leaves, guard cells, stems, flowers and siliques.

It is found in the cytoplasm. Its subcellular location is the cell cortex. It localises to the cell membrane. The enzyme catalyses L-seryl-[protein] + ATP = O-phospho-L-seryl-[protein] + ADP + H(+). It carries out the reaction L-threonyl-[protein] + ATP = O-phospho-L-threonyl-[protein] + ADP + H(+). Its activity is regulated as follows. Contains an N-terminal autoinhibitory domain. Functions in a MAP kinase cascade that acts as a molecular switch to regulate the first cell fate decisions in the zygote and the early embryo. Promotes elongation of the zygote and development of its basal daughter cell into the extra-embryonic suspensor. In stomatal development, acts downstream of the LRR receptor TMM, but upstream of the MKK4/MKK5-MPK3/MPK6 module to regulate stomatal cell fate before the guard mother cell (GMC) is specified. Plays a central role in both guard cell identity and pattern formation. This MAPK cascade also functions downstream of the ER receptor in regulating coordinated local cell proliferation, which shapes the morphology of plant organs. Upon brassinosteroid signaling, is inhibited by phosphorylation of its auto-inhibitory N-terminal domain by the GSK3-like kinase ASK7. In Arabidopsis thaliana (Mouse-ear cress), this protein is Mitogen-activated protein kinase kinase kinase YODA.